Reading from the N-terminus, the 485-residue chain is RAC-beta serine/threonine-protein kinase B (485 aa).

A PH domain is found at 5–109 (MVIKEGWLQK…WIIAIQTVAN (105 aa)). 2 O-linked (GlcNAc) serine glycosylation sites follow: Ser132 and Ser135. The 258-residue stretch at 156–413 (FDYLKLLGKG…AQEVMSHGFF (258 aa)) folds into the Protein kinase domain. Residues 162-170 (LGKGTFGKV) and Lys185 contribute to the ATP site. The active-site Proton acceptor is Asp279. Thr310 carries an O-linked (GlcNAc) threonine glycan. Thr313 is modified (phosphothreonine). O-linked (GlcNAc) threonine glycosylation is present at Thr317. One can recognise an AGC-kinase C-terminal domain in the interval 414-485 (ASINWQDVTE…QFSYSSSIRE (72 aa)). Residues 454 to 485 (LTPPDRYDNLDALESEQRPHFPQFSYSSSIRE) form a disordered region. The span at 458–472 (DRYDNLDALESEQRP) shows a compositional bias: basic and acidic residues. Residue Ser478 is modified to Phosphoserine. Ser478 carries an O-linked (GlcNAc) serine; alternate glycan.

Belongs to the protein kinase superfamily. AGC Ser/Thr protein kinase family. RAC subfamily. Phosphorylation on Thr-313 and Ser-478 is required for full activity. Phosphorylation of the activation loop at Thr-313 by PDPK1/PDK1 is a prerequisite for full activation. Phosphorylation by mTORC2 at Ser-478 in response to growth factors plays a key role in AKT1 activation by facilitating subsequent phosphorylation of the activation loop by PDPK1/PDK1.

The catalysed reaction is L-seryl-[protein] + ATP = O-phospho-L-seryl-[protein] + ADP + H(+). It carries out the reaction L-threonyl-[protein] + ATP = O-phospho-L-threonyl-[protein] + ADP + H(+). Its activity is regulated as follows. Two specific sites, one in the kinase domain (Thr-313) and the other in the C-terminal regulatory region (Ser-478), need to be phosphorylated for its full activation. Akt2-b is one of several closely related serine/threonine-protein kinases known as the AKT kinase, and which regulate many processes including metabolism, proliferation, cell survival, growth and angiogenesis. This is mediated through serine and/or threonine phosphorylation of a range of downstream substrates. Over 100 substrate candidates have been reported so far, but for most of them, no isoform specificity has been reported. May be involved in the inhibition of ciliogenesis. The sequence is that of RAC-beta serine/threonine-protein kinase B (akt2-b) from Xenopus laevis (African clawed frog).